A 614-amino-acid polypeptide reads, in one-letter code: Heat shock protein SSB1 (614 aa).

Residues 1–392 are nucleotide binding domain (NBD); that stretch reads MSTEVYDGAI…ILSGKATSAE (392 aa). Residues 16–18, Lys-74, 206–208, 272–279, and Gly-343 contribute to the ATP site; these read TTY, GGT, and ERAKRTLS. Residues 393 to 403 form an inter-domain linker region; sequence TADLLLLDVVP. Residues 404-614 are substrate binding domain (SBD); sequence LSLGVAMEGN…RAVTKAMSSR (211 aa). Residues 517–613 form a lid domain (SBDalpha) region; the sequence is TSEIENMISE…KRAVTKAMSS (97 aa). The Nuclear export signal signature appears at 575–583; the sequence is IENTMSEAM.

This sequence belongs to the heat shock protein 70 family. As to quaternary structure, interacts with HAT1 in starvation conditions.

The protein localises to the nucleus. It is found in the cytoplasm. It carries out the reaction ATP + H2O = ADP + phosphate + H(+). Its function is as follows. Chaperone that interacts with the histone acetyltransferase HAT1 and mediates its translocation from the nucleus to the cytoplasm during germination and starvation conditions. Within the cytoplasm, HAT1 regulates autophagy via acetylation of the autophagy-related proteins ATG3 and ATG9. The polypeptide is Heat shock protein SSB1 (Pyricularia oryzae (strain 70-15 / ATCC MYA-4617 / FGSC 8958) (Rice blast fungus)).